The chain runs to 559 residues: Dihydroxy-acid dehydratase (559 aa).

Residue Asp-80 coordinates Mg(2+). Residue Cys-121 coordinates [2Fe-2S] cluster. The Mg(2+) site is built by Asp-122 and Lys-123. Lys-123 carries the post-translational modification N6-carboxylysine. Cys-194 contributes to the [2Fe-2S] cluster binding site. Mg(2+) is bound at residue Glu-447. Ser-473 (proton acceptor) is an active-site residue.

It belongs to the IlvD/Edd family. In terms of assembly, homodimer. Requires [2Fe-2S] cluster as cofactor. Mg(2+) serves as cofactor.

It catalyses the reaction (2R)-2,3-dihydroxy-3-methylbutanoate = 3-methyl-2-oxobutanoate + H2O. The enzyme catalyses (2R,3R)-2,3-dihydroxy-3-methylpentanoate = (S)-3-methyl-2-oxopentanoate + H2O. Its pathway is amino-acid biosynthesis; L-isoleucine biosynthesis; L-isoleucine from 2-oxobutanoate: step 3/4. The protein operates within amino-acid biosynthesis; L-valine biosynthesis; L-valine from pyruvate: step 3/4. In terms of biological role, functions in the biosynthesis of branched-chain amino acids. Catalyzes the dehydration of (2R,3R)-2,3-dihydroxy-3-methylpentanoate (2,3-dihydroxy-3-methylvalerate) into 2-oxo-3-methylpentanoate (2-oxo-3-methylvalerate) and of (2R)-2,3-dihydroxy-3-methylbutanoate (2,3-dihydroxyisovalerate) into 2-oxo-3-methylbutanoate (2-oxoisovalerate), the penultimate precursor to L-isoleucine and L-valine, respectively. The polypeptide is Dihydroxy-acid dehydratase (Chlorobium chlorochromatii (strain CaD3)).